The following is a 177-amino-acid chain: Large ribosomal subunit protein uL6 (177 aa).

The protein belongs to the universal ribosomal protein uL6 family. As to quaternary structure, part of the 50S ribosomal subunit.

Its function is as follows. This protein binds to the 23S rRNA, and is important in its secondary structure. It is located near the subunit interface in the base of the L7/L12 stalk, and near the tRNA binding site of the peptidyltransferase center. The chain is Large ribosomal subunit protein uL6 from Psychrobacter arcticus (strain DSM 17307 / VKM B-2377 / 273-4).